Here is a 476-residue protein sequence, read N- to C-terminus: 3-isopropylmalate dehydratase large subunit (476 aa).

Residues Cys357, Cys417, and Cys420 each contribute to the [4Fe-4S] cluster site.

Belongs to the aconitase/IPM isomerase family. LeuC type 1 subfamily. In terms of assembly, heterodimer of LeuC and LeuD. Requires [4Fe-4S] cluster as cofactor.

The catalysed reaction is (2R,3S)-3-isopropylmalate = (2S)-2-isopropylmalate. The protein operates within amino-acid biosynthesis; L-leucine biosynthesis; L-leucine from 3-methyl-2-oxobutanoate: step 2/4. Its function is as follows. Catalyzes the isomerization between 2-isopropylmalate and 3-isopropylmalate, via the formation of 2-isopropylmaleate. The polypeptide is 3-isopropylmalate dehydratase large subunit (Mycobacterium leprae (strain TN)).